A 508-amino-acid polypeptide reads, in one-letter code: Cytochrome P450 monooxygenase orf4 (508 aa).

Cysteine 447 provides a ligand contact to heme.

It belongs to the cytochrome P450 family. It depends on heme as a cofactor.

It functions in the pathway mycotoxin biosynthesis. Functionally, cytochrome P450 monooxygenase; part of the gene cluster that mediates the biosynthesis of brefeldin A (BFA), a protein transport inhibitor that shows antiviral, antifungal, and antitumor properties. The proposed biosynthesis of BFA involves formation of an acyclic polyketide chain that is differentially tailored throughout the backbone. The highly reducing polyketide synthase Bref-PKS is proposed to synthesize the precisely reduced octaketide precursor, which could then be directly offloaded by the thiohydrolase enzyme Bref-TH followed by a cytochrome P450 monooxygenase-mediated formation of the cyclopentane ring and macrocyclization to afford 7-deoxy BFA. Alternatively, the first ring annulation can also occur on the ACP-tethered intermediate before the thiohydrolase release and lactonization. The C7-hydroxylation by another cytochrome P450 monooxygenase is believed to be the final step in the process to obtain the final structure of BFA. In addition to the HRPKS Bref-PKS and the thiohydrolase Bref-TH, the brefeldin A biosynthesis cluster contains 4 cytochrome p450 monooxygenases (called orf3 to orf6), as well a the probable cluster-specific transcription regulator orf8. This is Cytochrome P450 monooxygenase orf4 from Eupenicillium brefeldianum (Penicillium brefeldianum).